A 330-amino-acid chain; its full sequence is Aspartate--ammonia ligase (330 aa).

This sequence belongs to the class-II aminoacyl-tRNA synthetase family. AsnA subfamily.

The protein localises to the cytoplasm. The enzyme catalyses L-aspartate + NH4(+) + ATP = L-asparagine + AMP + diphosphate + H(+). It participates in amino-acid biosynthesis; L-asparagine biosynthesis; L-asparagine from L-aspartate (ammonia route): step 1/1. In Streptococcus pyogenes serotype M1, this protein is Aspartate--ammonia ligase.